The primary structure comprises 618 residues: Alpha-dioxygenase PIOX (618 aa).

Catalysis depends on histidine 157, which acts as the Proton acceptor. Position 158 (aspartate 158) interacts with Ca(2+). Histidine 162 provides a ligand contact to heme b. Positions 210, 212, 214, and 216 each coordinate Ca(2+). Histidine 311 lines the hexadecanoate pocket. 3 residues coordinate heme b: histidine 382, arginine 479, and arginine 483. Glutamate 599 is a binding site for hexadecanoate.

It belongs to the peroxidase family. Heme b is required as a cofactor. The cofactor is Ca(2+).

It carries out the reaction a 1,2-saturated fatty acid + O2 = a (2R)-2-hydroperoxy fatty acid. It catalyses the reaction (9Z,12Z)-octadecadienoate + O2 = (2R,9Z,12Z)-2-hydroperoxyoctadecadienoate. The catalysed reaction is hexadecanoate + O2 = (2R)-2-hydroperoxyhexadecanoate. The enzyme catalyses (9Z,12Z,15Z)-octadecatrienoate + O2 = (R)-2-hydroperoxy-(9Z,12Z,15Z)-octadecatrienoate. It carries out the reaction tetradecanoate + O2 = (2R)-2-hydroperoxytetradecanoate. It catalyses the reaction octadecanoate + O2 = (2R)-2-hydroperoxyoctadecanoate. The catalysed reaction is (9Z)-octadecenoate + O2 = (2R,9Z)-2-hydroperoxyoctadecenoate. Functionally, alpha-dioxygenase that catalyzes the primary oxygenation step of a variety of 14-20 carbon fatty acids, containing up to three unsaturated bonds, into their corresponding 2R-hydroperoxides. Involved in the production of oxylipins that function in cell signaling, wound healing, and protection from infection. The chain is Alpha-dioxygenase PIOX from Oryza sativa subsp. japonica (Rice).